The chain runs to 582 residues: Sodium-dependent low-affinity dicarboxylate transporter 1 (582 aa).

The next 12 membrane-spanning stretches (helical) occupy residues 17–37 (SFVI…VGDS), 59–79 (ALPL…FGIM), 87–107 (AYLP…LAVE), 130–150 (VMAG…NTAT), 224–244 (LMLS…TGTA), 271–291 (IFAF…LYLL), 317–337 (FSFA…LWIL), 353–373 (EFVS…TLPE), 401–421 (FPWS…GVKE), 455–475 (TNVC…AELA), 482–502 (PLNF…LPVA), and 527–547 (VTLG…GFVF).

The protein belongs to the SLC13A/DASS transporter (TC 2.A.47) family. NADC subfamily. Nad-1 and nad-2 are coexpressed in the intestinal tract from early larvae to adults, expression is from the pharynx through to the anus. Expression level is significantly greater in the anterior half of the intestine than in the posterior half.

Its subcellular location is the membrane. Low affinity sodium-dicarboxylate cotransporter that accepts a range of tricarboxylic acid-cycle intermediates with 4-5 carbon atoms. There is no interaction with monocarboxylates. This chain is Sodium-dependent low-affinity dicarboxylate transporter 1 (nac-1), found in Caenorhabditis elegans.